The chain runs to 527 residues: EGF domain-specific O-linked N-acetylglucosamine transferase (527 aa).

The signal sequence occupies residues 1–19 (MLMLLVFGVLLHEVPLSGQ). A Required for optimal activity motif is present at residues 295-297 (DYD). The N-linked (GlcNAc...) asparagine glycan is linked to Asn-354. Positions 524-527 (HDEL) match the Prevents secretion from ER motif.

It belongs to the glycosyltransferase 61 family.

Its subcellular location is the endoplasmic reticulum lumen. It catalyses the reaction L-seryl-[protein] + UDP-N-acetyl-alpha-D-glucosamine = 3-O-(N-acetyl-beta-D-glucosaminyl)-L-seryl-[protein] + UDP + H(+). The enzyme catalyses L-threonyl-[protein] + UDP-N-acetyl-alpha-D-glucosamine = 3-O-(N-acetyl-beta-D-glucosaminyl)-L-threonyl-[protein] + UDP + H(+). Its function is as follows. Catalyzes the transfer of a single N-acetylglucosamine from UDP-GlcNAc to a serine or threonine residue in extracellular proteins resulting in their modification with a beta-linked N-acetylglucosamine (O-GlcNAc). Specifically glycosylates the Thr residue located between the fifth and sixth conserved cysteines of folded EGF-like domains. The polypeptide is EGF domain-specific O-linked N-acetylglucosamine transferase (Eogt) (Rattus norvegicus (Rat)).